We begin with the raw amino-acid sequence, 568 residues long: 2-succinyl-5-enolpyruvyl-6-hydroxy-3-cyclohexene-1-carboxylate synthase (568 aa).

The protein belongs to the TPP enzyme family. MenD subfamily. Homodimer. Mg(2+) serves as cofactor. Mn(2+) is required as a cofactor. The cofactor is thiamine diphosphate.

It catalyses the reaction isochorismate + 2-oxoglutarate + H(+) = 5-enolpyruvoyl-6-hydroxy-2-succinyl-cyclohex-3-ene-1-carboxylate + CO2. Its pathway is quinol/quinone metabolism; 1,4-dihydroxy-2-naphthoate biosynthesis; 1,4-dihydroxy-2-naphthoate from chorismate: step 2/7. It participates in quinol/quinone metabolism; menaquinone biosynthesis. Functionally, catalyzes the thiamine diphosphate-dependent decarboxylation of 2-oxoglutarate and the subsequent addition of the resulting succinic semialdehyde-thiamine pyrophosphate anion to isochorismate to yield 2-succinyl-5-enolpyruvyl-6-hydroxy-3-cyclohexene-1-carboxylate (SEPHCHC). The sequence is that of 2-succinyl-5-enolpyruvyl-6-hydroxy-3-cyclohexene-1-carboxylate synthase from Actinobacillus pleuropneumoniae serotype 3 (strain JL03).